The following is a 449-amino-acid chain: Tripartite motif-containing protein 64 (449 aa).

An RING-type zinc finger spans residues 15 to 56 (CCICVNYFIDPVTIDCGHSFCRPCLCLCSEEGRAPMRCPSCR). The B box-type zinc-finger motif lies at 87-128 (SSDNICVLHEETKELFCEADKRLLCGPCSESPEHMAHSHSPI). Zn(2+) is bound by residues C92, H95, C114, and H120. A coiled-coil region spans residues 189–225 (LDEEEQRHLQALEREAEELFQQLQDSQVRMTQHLERM). A B30.2/SPRY domain is found at 269-449 (LTSWCITGVL…LRPFFCFGCT (181 aa)).

Belongs to the TRIM/RBCC family.

The polypeptide is Tripartite motif-containing protein 64 (TRIM64) (Homo sapiens (Human)).